Reading from the N-terminus, the 173-residue chain is Small ribosomal subunit protein uS7 (173 aa).

This sequence belongs to the universal ribosomal protein uS7 family. Part of the 30S ribosomal subunit. Contacts proteins S9 and S11.

One of the primary rRNA binding proteins, it binds directly to 16S rRNA where it nucleates assembly of the head domain of the 30S subunit. Is located at the subunit interface close to the decoding center, probably blocks exit of the E-site tRNA. The polypeptide is Small ribosomal subunit protein uS7 (Orientia tsutsugamushi (strain Ikeda) (Rickettsia tsutsugamushi)).